A 210-amino-acid polypeptide reads, in one-letter code: Vacuolar protein sorting-associated protein 28 homolog 2 (210 aa).

Residues 1–99 enclose the VPS28 N-terminal domain; sequence MMEVKLWNDK…VTSGLPATVE (99 aa). The VPS28 C-terminal domain maps to 109 to 205; sequence SNSASIVAEC…SSYNSFMAAL (97 aa).

The protein belongs to the VPS28 family. In terms of assembly, component of the endosomal sorting required for transport complex I (ESCRT-I), composed of ELC, VPS28 and VPS37. Interacts with ELC.

The protein resides in the endosome. Functionally, component of the ESCRT-I complex (endosomal sorting complex required for transport I), a regulator of vesicular trafficking process. Required for the sorting of endocytic ubiquitinated cargos into multivesicular bodies (MVBs). Mediates the association to the ESCRT-0 complex. This is Vacuolar protein sorting-associated protein 28 homolog 2 (VPS28-2) from Arabidopsis thaliana (Mouse-ear cress).